A 227-amino-acid polypeptide reads, in one-letter code: Peroxiredoxin 1 (227 aa).

The Thioredoxin domain maps to 6–161 (PLIGEKFPEM…ILRLIKSLQM (156 aa)). Catalysis depends on cysteine 48, which acts as the Cysteine sulfenic acid (-SOH) intermediate. Arginine 124 is a binding site for substrate.

Belongs to the peroxiredoxin family. Prx6 subfamily. As to quaternary structure, homodecamer. Pentamer of dimers that assemble into a ring structure.

The protein resides in the cytoplasm. The catalysed reaction is a hydroperoxide + [thioredoxin]-dithiol = an alcohol + [thioredoxin]-disulfide + H2O. Its function is as follows. Thiol-specific peroxidase that catalyzes the reduction of hydrogen peroxide and organic hydroperoxides to water and alcohols, respectively. Plays a role in cell protection against oxidative stress by detoxifying peroxides. The protein is Peroxiredoxin 1 of Picrophilus torridus (strain ATCC 700027 / DSM 9790 / JCM 10055 / NBRC 100828 / KAW 2/3).